The following is a 228-amino-acid chain: Mitochondrial assembly of ribosomal large subunit protein 1 (228 aa).

The disordered stretch occupies residues 53–77; it reads SLTRGLHHGPQPEERTAGDARLQPG.

This sequence belongs to the Iojap/RsfS family. Associates with the mitochondrial ribosome large subunit (39S) via interaction with MRPL12 and/or MRPL14. The interaction generates steric hindrance that is expected to prevent premature association of the 28S and 39S ribosomal subunits. Identified in a complex composed of MALSU1, MIEF1 upstream open reading frame protein and NDUFAB1; within the trimeric complex, MIEF1 upstream open reading frame protein functions as a bridging scaffold that interacts with MALSU1 on one side, and with NDUFAB1 on the other side. Interacts with MRPL12 and MRPL14.

The protein resides in the mitochondrion matrix. Required for normal mitochondrial ribosome function and mitochondrial translation. May play a role in ribosome biogenesis by preventing premature association of the 28S and 39S ribosomal subunits. Interacts with mitochondrial ribosomal protein uL14m (MRPL14), probably blocking formation of intersubunit bridge B8, preventing association of the 28S and 39S ribosomal subunits. Addition to isolated mitochondrial ribosomal subunits partially inhibits translation, probably by interfering with the association of the 28S and 39S ribosomal subunits and the formation of functional ribosomes. May also participate in the assembly and/or regulation of the stability of the large subunit of the mitochondrial ribosome. May function as a ribosomal silencing factor. In Mus musculus (Mouse), this protein is Mitochondrial assembly of ribosomal large subunit protein 1 (Malsu1).